A 302-amino-acid chain; its full sequence is Nucleotide-binding protein Bamb_2855 (302 aa).

ATP is bound at residue 8-15 (GISGSGKS). Position 57 to 60 (57 to 60 (DARS)) interacts with GTP.

Belongs to the RapZ-like family.

Displays ATPase and GTPase activities. In Burkholderia ambifaria (strain ATCC BAA-244 / DSM 16087 / CCUG 44356 / LMG 19182 / AMMD) (Burkholderia cepacia (strain AMMD)), this protein is Nucleotide-binding protein Bamb_2855.